The primary structure comprises 319 residues: Class I histocompatibility antigen, Non-RT1.A alpha-1 chain (319 aa).

An N-terminal signal peptide occupies residues 1–24; sequence MGAMAPRTLLLLLAAVLAPTQTWA. The interval 25–114 is alpha-1; sequence GSHSLRYFHT…LLSYYNQSEG (90 aa). The Extracellular portion of the chain corresponds to 25–307; sequence GSHSLRYFHT…WEPSPSTDSN (283 aa). A glycan (N-linked (GlcNAc...) asparagine) is linked at Asn110. Positions 115–206 are alpha-2; the sequence is GSHTIQRMYG…ERGKETLLRS (92 aa). 2 disulfide bridges follow: Cys125-Cys188 and Cys227-Cys283. The tract at residues 207–298 is alpha-3; that stretch reads DPPEAHVTLH…GLPEPLSQRW (92 aa). The Ig-like C1-type domain maps to 209–295; sequence PEAHVTLHPR…EHEGLPEPLS (87 aa). Residue Asn280 is glycosylated (N-linked (GlcNAc...) asparagine). The segment at 299 to 307 is connecting peptide; the sequence is EPSPSTDSN. The chain crosses the membrane as a helical span at residues 308–319; it reads LLLLFLELWQFL.

The protein belongs to the MHC class I family. As to quaternary structure, heterodimer of an alpha chain and a beta chain (beta-2-microglobulin).

It localises to the membrane. Involved in the presentation of foreign antigens to the immune system. This is Class I histocompatibility antigen, Non-RT1.A alpha-1 chain (RT1-Aw2) from Rattus norvegicus (Rat).